The following is a 389-amino-acid chain: 3-ketoacyl-CoA thiolase (389 aa).

C91 (acyl-thioester intermediate) is an active-site residue. Catalysis depends on proton acceptor residues H343 and C373.

Belongs to the thiolase-like superfamily. Thiolase family. Heterotetramer of two alpha chains (FadB) and two beta chains (FadA).

The protein localises to the cytoplasm. It catalyses the reaction an acyl-CoA + acetyl-CoA = a 3-oxoacyl-CoA + CoA. The protein operates within lipid metabolism; fatty acid beta-oxidation. Functionally, catalyzes the final step of fatty acid oxidation in which acetyl-CoA is released and the CoA ester of a fatty acid two carbons shorter is formed. The chain is 3-ketoacyl-CoA thiolase from Pseudoalteromonas translucida (strain TAC 125).